The chain runs to 359 residues: Mineralocorticoid receptor (359 aa).

The segment at residues 1–49 (FKRAVEGQHNYLCAGRNDCIIDKIRRKNCPACRVRKCLQAGMNLGARKS) is a DNA-binding region (nuclear receptor). Zn(2+)-binding residues include Cys-13, Cys-19, Cys-29, and Cys-32. The NR C4-type zinc finger occupies 13–37 (CAGRNDCIIDKIRRKNCPACRVRKC). The disordered stretch occupies residues 48–96 (KSKKPGKLKGVNEDSTPTKEGGQTCPGSGGGYLSSGEKELSTSPTNALV). The interval 50–107 (KKPGKLKGVNEDSTPTKEGGQTCPGSGGGYLSSGEKELSTSPTNALVPHGPGGGLVTP) is hinge. The NR LBD domain occupies 108 to 339 (YLPPSICSVL…EFPEMLVEII (232 aa)). 2 residues coordinate 21-hydroxyprogesterone: Asn-145 and Gln-151. Asn-145 and Gln-151 together coordinate aldosterone. Progesterone is bound by residues Asn-145 and Gln-151. The tract at residues 157 to 160 (KWAK) is important for coactivator binding. 2 residues coordinate 21-hydroxyprogesterone: Arg-192 and Thr-320. Positions 192 and 320 each coordinate aldosterone. Residues Arg-192 and Thr-320 each contribute to the progesterone site.

The protein belongs to the nuclear hormone receptor family. NR3 subfamily.

Its subcellular location is the cytoplasm. The protein resides in the nucleus. Receptor for both mineralocorticoids (MC) such as cortisol. Binds to mineralocorticoid response elements (MRE) and transactivates target genes. The effect of MC is to increase ion and water transport and thus raise extracellular fluid volume and blood pressure and lower potassium levels. This chain is Mineralocorticoid receptor (nr3c2), found in Oncorhynchus mykiss (Rainbow trout).